The following is a 451-amino-acid chain: Chromosomal replication initiator protein DnaA (451 aa).

The tract at residues 1–71 (MSEQEIWKKV…QTIMKDVIGY (71 aa)) is domain I, interacts with DnaA modulators. The tract at residues 71–112 (YEVEPKFFTAEQLAELDETSRKSNTPSEPQRQIIEYGHEGTD) is domain II. The segment at 113-329 (QFNTHNTFDT…GALTRLLAYS (217 aa)) is domain III, AAA+ region. ATP-binding residues include G157, G159, K160, and T161. Positions 330 to 451 (KLQGRPITTE…EDLEKEIRNQ (122 aa)) are domain IV, binds dsDNA.

The protein belongs to the DnaA family. As to quaternary structure, oligomerizes as a right-handed, spiral filament on DNA at oriC.

The protein localises to the cytoplasm. In terms of biological role, plays an essential role in the initiation and regulation of chromosomal replication. ATP-DnaA binds to the origin of replication (oriC) to initiate formation of the DNA replication initiation complex once per cell cycle. Binds the DnaA box (a 9 base pair repeat at the origin) and separates the double-stranded (ds)DNA. Forms a right-handed helical filament on oriC DNA; dsDNA binds to the exterior of the filament while single-stranded (ss)DNA is stabiized in the filament's interior. The ATP-DnaA-oriC complex binds and stabilizes one strand of the AT-rich DNA unwinding element (DUE), permitting loading of DNA polymerase. After initiation quickly degrades to an ADP-DnaA complex that is not apt for DNA replication. Binds acidic phospholipids. This is Chromosomal replication initiator protein DnaA from Staphylococcus haemolyticus (strain JCSC1435).